We begin with the raw amino-acid sequence, 520 residues long: Succinyl-CoA:3-ketoacid coenzyme A transferase 2A, mitochondrial (520 aa).

The N-terminal 39 residues, 1–39 (MAALRLLAWAFSRRVSAHRPQPTLPHHLIRHYPTTRCGK), are a transit peptide targeting the mitochondrion. Residues 280–299 (ERLTTRDSPPAPGSKDQDPK) are disordered. Catalysis depends on Glu342, which acts as the 5-glutamyl coenzyme A thioester intermediate.

Belongs to the 3-oxoacid CoA-transferase family. As to quaternary structure, homodimer. As to expression, expressed in flagella of epididymal sperm.

It is found in the mitochondrion. It catalyses the reaction a 3-oxo acid + succinyl-CoA = a 3-oxoacyl-CoA + succinate. It functions in the pathway ketone metabolism; succinyl-CoA degradation; acetoacetyl-CoA from succinyl-CoA: step 1/1. Functionally, key enzyme for ketone body catabolism. Transfers the CoA moiety from succinate to acetoacetate. Formation of the enzyme-CoA intermediate proceeds via an unstable anhydride species formed between the carboxylate groups of the enzyme and substrate. Probably play and important roles in the energy metabolism of spermatozoa. This chain is Succinyl-CoA:3-ketoacid coenzyme A transferase 2A, mitochondrial (Oxct2a), found in Rattus norvegicus (Rat).